The following is a 453-amino-acid chain: Aldehyde dehydrogenase, dimeric NADP-preferring (453 aa).

An N-acetylserine modification is found at Ser-2. At Lys-178 the chain carries N6-acetyllysine. Gly-188–Gly-193 provides a ligand contact to NAD(+). The residue at position 194 (Lys-194) is an N6-acetyllysine. Residues Glu-210 and Cys-244 contribute to the active site.

It belongs to the aldehyde dehydrogenase family. As to quaternary structure, homodimer. In terms of tissue distribution, high levels in stomach, esophagus and lung; low level in the liver and kidney.

Its subcellular location is the cytoplasm. It catalyses the reaction an aldehyde + NAD(+) + H2O = a carboxylate + NADH + 2 H(+). The enzyme catalyses octanal + NAD(+) + H2O = octanoate + NADH + 2 H(+). ALDHs play a major role in the detoxification of alcohol-derived acetaldehyde. They are involved in the metabolism of corticosteroids, biogenic amines, neurotransmitters, and lipid peroxidation. Oxidizes medium and long chain aldehydes into non-toxic fatty acids. Preferentially oxidizes aromatic aldehyde substrates. Comprises about 50 percent of corneal epithelial soluble proteins. May play a role in preventing corneal damage caused by ultraviolet light. This chain is Aldehyde dehydrogenase, dimeric NADP-preferring (ALDH3A1), found in Homo sapiens (Human).